The primary structure comprises 539 residues: Acid-sensing ion channel 4-A (539 aa).

Topologically, residues 1-68 (MPIEFVCKIK…SGRLGVRQTL (68 aa)) are cytoplasmic. A helical transmembrane segment spans residues 69 to 89 (WALAFLVSLALFLYQAAKCAI). Residues 90 to 432 (SYLEHPHVTA…EQKKAYDVAG (343 aa)) lie on the Extracellular side of the membrane. Disulfide bonds link Cys-116/Cys-200 and Cys-178/Cys-185. N-linked (GlcNAc...) asparagine glycosylation is found at Asn-136, Asn-165, Asn-179, Asn-184, Asn-206, and Asn-241. Disulfide bonds link Cys-294–Cys-369, Cys-313–Cys-365, Cys-317–Cys-363, Cys-326–Cys-347, and Cys-328–Cys-340. Asn-370 is a glycosylation site (N-linked (GlcNAc...) asparagine). Residues 433-453 (LLGDIGGQMGLFIGASVLTIL) traverse the membrane as a helical segment. Residues 446–448 (GAS) carry the GAS motif; ion selectivity filter motif. Residues 454 to 539 (EILDYVYEVI…HHRVSEDFAC (86 aa)) lie on the Cytoplasmic side of the membrane. Residues 474 to 494 (QRDDKKQTQQQQQASTVATVN) are disordered.

Belongs to the amiloride-sensitive sodium channel (TC 1.A.6) family. ASIC4 subfamily. In terms of assembly, homotrimer. Heterotrimer; with other ASIC proteins producing functional channels. Expressed in central nervous system.

The protein localises to the cell membrane. The catalysed reaction is Na(+)(in) = Na(+)(out). Inhibited by the diuretic drug amiloride. Could form pH-gated trimeric sodium channels and function as a postsynaptic excitatory receptors in the nervous system. The chain is Acid-sensing ion channel 4-A from Danio rerio (Zebrafish).